Consider the following 274-residue polypeptide: NADH-ubiquinone oxidoreductase chain 2 (274 aa).

A run of 8 helical transmembrane segments spans residues 28 to 48, 54 to 74, 79 to 99, 107 to 127, 128 to 148, 171 to 191, 206 to 226, and 254 to 274; these read MIIMSALLLKSGAAPFHFWFP, LTWMNALMLMTWQKIAPLMLI, IKYLLLISVILSVIIGAIGGL, LMAFSSINHLGWMLSSLMFSE, SIWLIYFFFYSFLSFVLTFMF, FTLFMNFLSLGGLPPFLGFLP, FLLTLMMMSTLITLFFYLRIC, and LIMTFFSIFGLFMISLFYFMF.

This sequence belongs to the complex I subunit 2 family.

The protein resides in the mitochondrion inner membrane. The catalysed reaction is a ubiquinone + NADH + 5 H(+)(in) = a ubiquinol + NAD(+) + 4 H(+)(out). In terms of biological role, core subunit of the mitochondrial membrane respiratory chain NADH dehydrogenase (Complex I) that is believed to belong to the minimal assembly required for catalysis. Complex I functions in the transfer of electrons from NADH to the respiratory chain. The immediate electron acceptor for the enzyme is believed to be ubiquinone. In Drosophila sechellia (Fruit fly), this protein is NADH-ubiquinone oxidoreductase chain 2 (mt:ND2).